The sequence spans 199 residues: UPF0329 protein ECU01_0120/ECU01_1490/ECU08_0050 (199 aa).

This sequence belongs to the UPF0329 family.

This chain is UPF0329 protein ECU01_0120/ECU01_1490/ECU08_0050, found in Encephalitozoon cuniculi (strain GB-M1) (Microsporidian parasite).